Here is a 166-residue protein sequence, read N- to C-terminus: Sec-independent protein translocase protein TatB (166 aa).

The chain crosses the membrane as a helical span at residues 2 to 22 (FNDIGALELLTLGVLAVLVFG). The segment at 110–166 (TPAASDTANSAVNGSAGAAADGVTTSLTKTGETTPDLLKKAPQQAQPERPPFDADAT) is disordered. Low complexity predominate over residues 117-129 (ANSAVNGSAGAAA). Positions 132–142 (VTTSLTKTGET) are enriched in polar residues.

It belongs to the TatB family. The Tat system comprises two distinct complexes: a TatABC complex, containing multiple copies of TatA, TatB and TatC subunits, and a separate TatA complex, containing only TatA subunits. Substrates initially bind to the TatABC complex, which probably triggers association of the separate TatA complex to form the active translocon.

The protein resides in the cell membrane. Its function is as follows. Part of the twin-arginine translocation (Tat) system that transports large folded proteins containing a characteristic twin-arginine motif in their signal peptide across membranes. Together with TatC, TatB is part of a receptor directly interacting with Tat signal peptides. TatB may form an oligomeric binding site that transiently accommodates folded Tat precursor proteins before their translocation. The polypeptide is Sec-independent protein translocase protein TatB (Streptomyces griseus subsp. griseus (strain JCM 4626 / CBS 651.72 / NBRC 13350 / KCC S-0626 / ISP 5235)).